A 199-amino-acid chain; its full sequence is Twist-related protein 1 (199 aa).

Positions 1 to 18 (MMQDVSSSPVSPADDSLS) are enriched in low complexity. The segment at 1-102 (MMQDVSSSPV…GGGSPQSYEE (102 aa)) is disordered. A compositionally biased stretch (basic residues) spans 34 to 43 (RGGRKRRSSR). 2 stretches are compositionally biased toward gly residues: residues 46–65 (AGGGAGPGGAAGGGVGGGDE) and 80–96 (GCGGGAGGGGSSSGGGS). The bHLH domain maps to 105–156 (TQRVMANVRERQRTQSLNEAFAALRKIIPTLPSDKLSKIQTLKLAARYIDFL). The sufficient for transactivation activity stretch occupies residues 158-188 (QVLQSDELDSKMASCSYVAHERLSYAFSVWR).

In terms of assembly, efficient DNA binding requires dimerization with another bHLH protein. Homodimer or heterodimer with E proteins such as TCF3. ID1 binds preferentially to TCF3 but does not interact efficiently with TWIST1 so ID1 levels control the amount of TCF3 available to dimerize with TWIST and thus determine the type of dimer formed.

Its subcellular location is the nucleus. Its function is as follows. Acts as a transcriptional regulator. Inhibits myogenesis by sequestrating E proteins, inhibiting trans-activation by MEF2, and inhibiting DNA-binding by MYOD1 through physical interaction. This interaction probably involves the basic domains of both proteins. Also represses expression of pro-inflammatory cytokines such as TNFA and IL1B. Regulates cranial suture patterning and fusion. Activates transcription as a heterodimer with E proteins. Regulates gene expression differentially, depending on dimer composition. Homodimers induce expression of FGFR2 and POSTN while heterodimers repress FGFR2 and POSTN expression and induce THBS1 expression. Heterodimerization is also required for osteoblast differentiation. Represses the activity of the circadian transcriptional activator: NPAS2-BMAL1 heterodimer. The polypeptide is Twist-related protein 1 (TWIST1) (Microcebus murinus (Gray mouse lemur)).